We begin with the raw amino-acid sequence, 358 residues long: Alanine racemase (358 aa).

Catalysis depends on lysine 35, which acts as the Proton acceptor; specific for D-alanine. Position 35 is an N6-(pyridoxal phosphate)lysine (lysine 35). Arginine 130 is a substrate binding site. Tyrosine 255 serves as the catalytic Proton acceptor; specific for L-alanine. Position 303 (methionine 303) interacts with substrate.

This sequence belongs to the alanine racemase family. It depends on pyridoxal 5'-phosphate as a cofactor.

It carries out the reaction L-alanine = D-alanine. It participates in amino-acid biosynthesis; D-alanine biosynthesis; D-alanine from L-alanine: step 1/1. Its function is as follows. Catalyzes the interconversion of L-alanine and D-alanine. May also act on other amino acids. This Shewanella baltica (strain OS195) protein is Alanine racemase (alr).